The following is a 126-amino-acid chain: Small ribosomal subunit protein uS13 (126 aa).

Residues 92 to 126 are disordered; it reads HRMGLPVRGQRTRTNARTRRGRRQTVAGKKKAPGK. The span at 101-126 shows a compositional bias: basic residues; it reads QRTRTNARTRRGRRQTVAGKKKAPGK.

This sequence belongs to the universal ribosomal protein uS13 family. Part of the 30S ribosomal subunit. Forms a loose heterodimer with protein S19. Forms two bridges to the 50S subunit in the 70S ribosome.

Functionally, located at the top of the head of the 30S subunit, it contacts several helices of the 16S rRNA. In the 70S ribosome it contacts the 23S rRNA (bridge B1a) and protein L5 of the 50S subunit (bridge B1b), connecting the 2 subunits; these bridges are implicated in subunit movement. Contacts the tRNAs in the A and P-sites. The protein is Small ribosomal subunit protein uS13 of Nostoc sp. (strain PCC 7120 / SAG 25.82 / UTEX 2576).